Here is a 290-residue protein sequence, read N- to C-terminus: Glycine--tRNA ligase alpha subunit (290 aa).

This sequence belongs to the class-II aminoacyl-tRNA synthetase family. In terms of assembly, tetramer of two alpha and two beta subunits.

The protein localises to the cytoplasm. It catalyses the reaction tRNA(Gly) + glycine + ATP = glycyl-tRNA(Gly) + AMP + diphosphate. This Fusobacterium nucleatum subsp. nucleatum (strain ATCC 25586 / DSM 15643 / BCRC 10681 / CIP 101130 / JCM 8532 / KCTC 2640 / LMG 13131 / VPI 4355) protein is Glycine--tRNA ligase alpha subunit.